A 342-amino-acid polypeptide reads, in one-letter code: tRNA N6-adenosine threonylcarbamoyltransferase (342 aa).

2 residues coordinate Fe cation: H119 and H123. Substrate-binding positions include 142–146, D175, G188, and N282; that span reads VVSGG. D310 serves as a coordination point for Fe cation.

Belongs to the KAE1 / TsaD family. Fe(2+) is required as a cofactor.

The protein resides in the cytoplasm. It catalyses the reaction L-threonylcarbamoyladenylate + adenosine(37) in tRNA = N(6)-L-threonylcarbamoyladenosine(37) in tRNA + AMP + H(+). In terms of biological role, required for the formation of a threonylcarbamoyl group on adenosine at position 37 (t(6)A37) in tRNAs that read codons beginning with adenine. Is involved in the transfer of the threonylcarbamoyl moiety of threonylcarbamoyl-AMP (TC-AMP) to the N6 group of A37, together with TsaE and TsaB. TsaD likely plays a direct catalytic role in this reaction. In Moorella thermoacetica (strain ATCC 39073 / JCM 9320), this protein is tRNA N6-adenosine threonylcarbamoyltransferase.